Consider the following 476-residue polypeptide: Protein Cep89 homolog (476 aa).

2 disordered regions span residues 1–29 (MSTR…KKNR) and 172–193 (LGEG…APYP). The segment covering 180–190 (GGSTKVSSSSA) has biased composition (polar residues).

Its subcellular location is the cytoplasm. The protein localises to the cytosol. It localises to the mitochondrion intermembrane space. Required for mitochondrial complex IV activity. May be involved in non-associative learning. In Drosophila melanogaster (Fruit fly), this protein is Protein Cep89 homolog (Cep89).